We begin with the raw amino-acid sequence, 458 residues long: MKALDGLRESLYPSLDFQLYQDDQVCSADASQPLADSVGAHDLAWSERMCPLPLAPAKSPLLACPESPDLCLCALQKTPLGRAPQDLGEDASNMRHQPPSLYKASTDSEKLTIKDSLNREEMGNEPERGAYPHLPPRTSSFPDAGLDRKSLSPLTFWPWLPPTLISKEPPIHIYPIFPGYPLLPLPYLFTYGALPSAQHPYLFMLPPHSTYPTVAGPSLLMTASGSGPRIPQEKTLLLHSGAFQSAGHTLHSQVESRSSRDTRTPGQAGVAAPTRRAVPGSRAGVIALPYPLKKENGKILYECNVCGKNFGQLSNLKVHLRVHSGERPFQCALCQKRFTQLAHLQKHHLVHTGERPHQCQVCHKRFSSSSNLKTHLRLHSGAKPSQCGLCPSYLTPNVYPKLHHRLRAPQLRGLTHTHLPLASLTCLAQWHQGALDLVEKKMGWTVDKVSSESKGKQG.

Disordered stretches follow at residues 84–109 (PQDL…TDSE) and 249–275 (TLHS…APTR). 3 C2H2-type zinc fingers span residues 301 to 323 (YECN…LRVH), 329 to 351 (FQCA…HLVH), and 357 to 379 (HQCQ…LRLH).

It belongs to the krueppel C2H2-type zinc-finger protein family. Expressed in tissue-resident memory T (Trm) cell population in non-lymphoid organs, such as skin and gut. Expressed in innate lymphocytes, including tissue-resident natural killer (trNK) and natural killer T (NKT) cells in thymus, spleen and liver.

The protein localises to the nucleus. Transcription factor that mediates a transcriptional program in various innate and adaptive immune tissue-resident lymphocyte T-cell types such as tissue-resident memory T (Trm), natural killer (trNK) and natural killer T (NKT) cells and negatively regulates gene expression of proteins that promote the egress of tissue-resident T-cell populations from non-lymphoid organs. Plays a role in the development, retention and long-term establishment of adaptive and innate tissue-resident lymphocyte T-cell types in non-lymphoid organs, such as the skin and gut, but also in other nonbarrier tissues like liver and kidney, and therefore may provide immediate immunological protection against reactivating infections or viral reinfection. Also plays a role in the differentiation of both thymic and peripheral NKT cells. Negatively regulates the accumulation of interferon-gamma (IFN-gamma) in NKT cells at steady state or after antigenic stimulation. Positively regulates granzyme B production in NKT cells after innate stimulation. Associates with the transcriptional repressor PRDM1/BLIMP1 to chromatin at gene promoter regions. The polypeptide is Tissue-resident T-cell transcription regulator protein ZNF683 (Mus musculus (Mouse)).